Consider the following 136-residue polypeptide: Large ribosomal subunit protein uL16 (136 aa).

Belongs to the universal ribosomal protein uL16 family. Part of the 50S ribosomal subunit.

Binds 23S rRNA and is also seen to make contacts with the A and possibly P site tRNAs. The protein is Large ribosomal subunit protein uL16 of Pelagibacter ubique (strain HTCC1062).